Consider the following 484-residue polypeptide: Endoglucanase 3 (484 aa).

Residues 1 to 21 (MASPFFFVFLLSALSLENTYA) form the signal peptide. D77 (nucleophile) is an active-site residue. A glycan (N-linked (GlcNAc...) asparagine) is linked at N370. Catalysis depends on residues H402, D453, and E462.

The protein belongs to the glycosyl hydrolase 9 (cellulase E) family. In terms of tissue distribution, specifically expressed in root cap cells.

It is found in the secreted. The catalysed reaction is Endohydrolysis of (1-&gt;4)-beta-D-glucosidic linkages in cellulose, lichenin and cereal beta-D-glucans.. May be involved in the sloughing (cell-cell separation) of the root cap cells from root tip. The polypeptide is Endoglucanase 3 (CEL5) (Arabidopsis thaliana (Mouse-ear cress)).